Here is a 540-residue protein sequence, read N- to C-terminus: Glucose-6-phosphate isomerase (540 aa).

Catalysis depends on glutamate 346, which acts as the Proton donor. Active-site residues include histidine 377 and lysine 505.

Belongs to the GPI family.

The protein localises to the cytoplasm. The enzyme catalyses alpha-D-glucose 6-phosphate = beta-D-fructose 6-phosphate. It functions in the pathway carbohydrate biosynthesis; gluconeogenesis. The protein operates within carbohydrate degradation; glycolysis; D-glyceraldehyde 3-phosphate and glycerone phosphate from D-glucose: step 2/4. Catalyzes the reversible isomerization of glucose-6-phosphate to fructose-6-phosphate. This chain is Glucose-6-phosphate isomerase, found in Francisella tularensis subsp. mediasiatica (strain FSC147).